The following is a 260-amino-acid chain: Imidazole glycerol phosphate synthase subunit HisF (260 aa).

Catalysis depends on residues Asp-11 and Asp-130.

Belongs to the HisA/HisF family. Heterodimer of HisH and HisF.

The protein resides in the cytoplasm. It carries out the reaction 5-[(5-phospho-1-deoxy-D-ribulos-1-ylimino)methylamino]-1-(5-phospho-beta-D-ribosyl)imidazole-4-carboxamide + L-glutamine = D-erythro-1-(imidazol-4-yl)glycerol 3-phosphate + 5-amino-1-(5-phospho-beta-D-ribosyl)imidazole-4-carboxamide + L-glutamate + H(+). It functions in the pathway amino-acid biosynthesis; L-histidine biosynthesis; L-histidine from 5-phospho-alpha-D-ribose 1-diphosphate: step 5/9. Functionally, IGPS catalyzes the conversion of PRFAR and glutamine to IGP, AICAR and glutamate. The HisF subunit catalyzes the cyclization activity that produces IGP and AICAR from PRFAR using the ammonia provided by the HisH subunit. The sequence is that of Imidazole glycerol phosphate synthase subunit HisF from Endomicrobium trichonymphae.